We begin with the raw amino-acid sequence, 539 residues long: CTP synthase (539 aa).

Residues 1–268 form an amidoligase domain region; the sequence is MSFKSIFLTG…SDFLLNKLGF (268 aa). A CTP-binding site is contributed by S14. S14 contacts UTP. Residue 15–20 coordinates ATP; sequence SLGKGL. Y55 contacts L-glutamine. Residue D72 participates in ATP binding. D72 and E142 together coordinate Mg(2+). CTP is bound by residues 149–151, 188–193, and K224; these read DIE and KTKPTQ. UTP is bound by residues 188–193 and K224; that span reads KTKPTQ. In terms of domain architecture, Glutamine amidotransferase type-1 spans 294–532; it reads RIGLVGKYLE…IRAAKAYSLE (239 aa). Position 353 (G353) interacts with L-glutamine. C380 acts as the Nucleophile; for glutamine hydrolysis in catalysis. L-glutamine contacts are provided by residues 381 to 384, E404, and R460; that span reads LGMQ. Catalysis depends on residues H505 and E507.

This sequence belongs to the CTP synthase family. Homotetramer.

The enzyme catalyses UTP + L-glutamine + ATP + H2O = CTP + L-glutamate + ADP + phosphate + 2 H(+). It carries out the reaction L-glutamine + H2O = L-glutamate + NH4(+). It catalyses the reaction UTP + NH4(+) + ATP = CTP + ADP + phosphate + 2 H(+). It functions in the pathway pyrimidine metabolism; CTP biosynthesis via de novo pathway; CTP from UDP: step 2/2. Allosterically activated by GTP, when glutamine is the substrate; GTP has no effect on the reaction when ammonia is the substrate. The allosteric effector GTP functions by stabilizing the protein conformation that binds the tetrahedral intermediate(s) formed during glutamine hydrolysis. Inhibited by the product CTP, via allosteric rather than competitive inhibition. Its function is as follows. Catalyzes the ATP-dependent amination of UTP to CTP with either L-glutamine or ammonia as the source of nitrogen. Regulates intracellular CTP levels through interactions with the four ribonucleotide triphosphates. This chain is CTP synthase, found in Chlamydia trachomatis serovar A (strain ATCC VR-571B / DSM 19440 / HAR-13).